The chain runs to 390 residues: Elongation factor Ts, mitochondrial (390 aa).

It belongs to the EF-Ts family.

It is found in the mitochondrion. Functionally, associates with the EF-Tu.GDP complex and induces the exchange of GDP to GTP. It remains bound to the aminoacyl-tRNA.EF-Tu.GTP complex up to the GTP hydrolysis stage on the ribosome. This chain is Elongation factor Ts, mitochondrial, found in Plasmodium vivax (strain Salvador I).